A 189-amino-acid polypeptide reads, in one-letter code: Elongation factor P (189 aa).

This sequence belongs to the elongation factor P family.

It is found in the cytoplasm. It participates in protein biosynthesis; polypeptide chain elongation. Functionally, involved in peptide bond synthesis. Stimulates efficient translation and peptide-bond synthesis on native or reconstituted 70S ribosomes in vitro. Probably functions indirectly by altering the affinity of the ribosome for aminoacyl-tRNA, thus increasing their reactivity as acceptors for peptidyl transferase. The polypeptide is Elongation factor P (Rhizobium johnstonii (strain DSM 114642 / LMG 32736 / 3841) (Rhizobium leguminosarum bv. viciae)).